The sequence spans 208 residues: Glycerol-3-phosphate acyltransferase (208 aa).

Helical transmembrane passes span 3–23 (ILLAALVAYLIGSVSFAVVVS), 51–71 (KAAILTLVGDAFKGWIAVWLA), 78–98 (DVAIAWVAIAVFLGHLYPVFF), 115–135 (AVHPVLGLATALTWLIVAFFF), and 140–160 (LAALVAAVFAPVFDVFLFGMP).

It belongs to the PlsY family. As to quaternary structure, probably interacts with PlsX.

Its subcellular location is the cell inner membrane. It catalyses the reaction an acyl phosphate + sn-glycerol 3-phosphate = a 1-acyl-sn-glycero-3-phosphate + phosphate. Its pathway is lipid metabolism; phospholipid metabolism. In terms of biological role, catalyzes the transfer of an acyl group from acyl-phosphate (acyl-PO(4)) to glycerol-3-phosphate (G3P) to form lysophosphatidic acid (LPA). This enzyme utilizes acyl-phosphate as fatty acyl donor, but not acyl-CoA or acyl-ACP. The protein is Glycerol-3-phosphate acyltransferase of Burkholderia orbicola (strain MC0-3).